Reading from the N-terminus, the 335-residue chain is Glucokinase (335 aa).

11–16 (ADIGGT) contacts ATP.

It belongs to the bacterial glucokinase family.

It localises to the cytoplasm. The enzyme catalyses D-glucose + ATP = D-glucose 6-phosphate + ADP + H(+). In Xanthomonas campestris pv. campestris (strain 8004), this protein is Glucokinase.